A 422-amino-acid polypeptide reads, in one-letter code: MLRVRCVRGGSRGAEAVHYIGSMLRKGFVGWVQRSFQSTQAAAVSEKPCAADEKVSDTAVQECPVCSYNEWDPLEEVIVGRPENANVPPFSVEVKANTYEKYWPFYQKHGGQSFPVEHVKKATEEIEEMCNVLRHEGVVVQRPEVIDWSVKYKTPDFESTGMYAAMPRDILLVVGNEIIEAPMAWRARFFEYRAYRPLIKDYFRRGAKWTTAPKPTMADELYDQDYPIRTVEDRHKLAAMGKFVTTEFEPCFDAADFMRAGRDIFAQRSQVTNYLGIEWMRRHLAPDYKVHIISFKDPNPMHIDATFNIIGPGLVLSNPDRPCHQIELFKKAGWTVVTPPIPLIPDNHPLWMSSKWLSMNVLMLDEKRVMVDANETSIQKMFEKLGISTIKVNIRHANSLGGGFHCWTCDIRRRGTLQSYFS.

Residues Met1–Gln37 constitute a mitochondrion transit peptide. Active-site residues include Asp253 and His302. Residue Cys406 is the Amidino-cysteine intermediate of the active site.

Belongs to the amidinotransferase family. In terms of assembly, homodimer.

The protein resides in the mitochondrion inner membrane. The catalysed reaction is L-arginine + glycine = guanidinoacetate + L-ornithine. It functions in the pathway amine and polyamine biosynthesis; creatine biosynthesis; creatine from L-arginine and glycine: step 1/2. Its function is as follows. Catalyzes the biosynthesis of guanidinoacetate, the immediate precursor of creatine. Creatine plays a vital role in energy metabolism in muscle tissues. May play a role in embryonic and central nervous system development. This Xenopus tropicalis (Western clawed frog) protein is Glycine amidinotransferase, mitochondrial.